The following is a 188-amino-acid chain: MASYSTNEFRSGLKIMLDGEPCAIIENEFVKPGKGQAFNRVRLRKLVSGKVLEKTFKSGDSVEAADVMDINLTYLYNDGEFWHFMNNENFEQLAADAKVVGDNAKWLVEQAECVLTLWNGQPIAVTPPNFVELEITETDPGLKGDTAGTGGKPATLTTGAVVKVPLFVQIGEVIKVDTRSGDYVSRVK.

The residue at position 34 (Lys-34) is an N6-(3,6-diaminohexanoyl)-5-hydroxylysine.

The protein belongs to the elongation factor P family. Post-translationally, may be beta-lysylated on the epsilon-amino group of Lys-34 by the combined action of EpmA and EpmB, and then hydroxylated on the C5 position of the same residue by EpmC (if this protein is present). Lysylation is critical for the stimulatory effect of EF-P on peptide-bond formation. The lysylation moiety may extend toward the peptidyltransferase center and stabilize the terminal 3-CCA end of the tRNA. Hydroxylation of the C5 position on Lys-34 may allow additional potential stabilizing hydrogen-bond interactions with the P-tRNA.

The protein localises to the cytoplasm. It participates in protein biosynthesis; polypeptide chain elongation. In terms of biological role, involved in peptide bond synthesis. Alleviates ribosome stalling that occurs when 3 or more consecutive Pro residues or the sequence PPG is present in a protein, possibly by augmenting the peptidyl transferase activity of the ribosome. Modification of Lys-34 is required for alleviation. This chain is Elongation factor P, found in Sodalis glossinidius (strain morsitans).